We begin with the raw amino-acid sequence, 1007 residues long: Sal-like protein 2 (1007 aa).

The disordered stretch occupies residues 1–33; sequence MSRRKQRKPQQLISDCEGPSASENGDASEEDHP. The segment at 34–56 adopts a C2H2-type 1; atypical zinc-finger fold; the sequence is QVCAKCCAQFTDPTEFLAHQNAC. Disordered regions lie at residues 59–121, 137–177, 220–243, and 286–306; these read DPPV…GEES, GGGL…SGHL, PASP…PLFS, and PFSA…SPAL. The segment covering 70–80 has biased composition (low complexity); that stretch reads ENPNNSSASSE. Residues 99–108 are compositionally biased toward polar residues; it reads PPDSGSSVPT. Residues 151-171 show a composition bias toward pro residues; sequence PLPPESTPAPPPPPPPPPPPG. Residue Ser-243 is modified to Phosphoserine. C2H2-type zinc fingers lie at residues 373-395 and 401-423; these read HKCR…LRSH and YKCN…FHRH. Disordered regions lie at residues 520–540 and 610–629; these read KNKA…SGVA and AASG…ASSG. 3 consecutive C2H2-type zinc fingers follow at residues 631 to 653, 659 to 681, and 691 to 713; these read NQCV…YGQH, FKCK…FVGH, and NSCP…VRMH. Positions 714 to 886 are disordered; that stretch reads LGGQIPNGGT…SALTPEGEAT (173 aa). Over residues 734–744 the composition is skewed to polar residues; that stretch reads ENGSEQSTVSG. The span at 747–757 shows a compositional bias: low complexity; the sequence is SFPQQQSQQPS. Positions 758 to 782 are enriched in acidic residues; that stretch reads PEEELSEEEEEEDEEEEEDVTDEDS. 3 positions are modified to phosphoserine: Ser-797, Ser-802, and Ser-806. Over residues 803 to 812 the composition is skewed to acidic residues; sequence EEASGAEEEV. Basic and acidic residues predominate over residues 862–871; it reads GKEEGGKPER. A Glycyl lysine isopeptide (Lys-Gly) (interchain with G-Cter in ubiquitin) cross-link involves residue Lys-911. 2 consecutive C2H2-type zinc fingers follow at residues 911-933 and 940-963; these read KACE…QKTH and FTCV…LLAH.

This sequence belongs to the sal C2H2-type zinc-finger protein family. Highest levels in adult brain (in different areas). Lower levels in heart; very low levels in kidney and pancreas. Expressed throughout the retina and lens vesicle as well as the periocular mesenchyme.

The protein localises to the nucleus. Probable transcription factor that plays a role in eye development before, during, and after optic fissure closure. The protein is Sal-like protein 2 (SALL2) of Homo sapiens (Human).